Here is a 241-residue protein sequence, read N- to C-terminus: Beta-nerve growth factor (241 aa).

The N-terminal stretch at 1–18 is a signal peptide; sequence MSMLFYTLITAFLIGVQA. The propeptide occupies 19–121; that stretch reads EPYTDSNVPE…PFNRTHRSKR (103 aa). N69 and N114 each carry an N-linked (GlcNAc...) asparagine glycan. Disulfide bonds link C136/C201, C179/C229, and C189/C231. The a 1-acyl-sn-glycero-3-phospho-(1D-myo-inositol) site is built by R171, Y173, and K209. R171 serves as a coordination point for a 1-acyl-sn-glycero-3-phospho-L-serine. A 1-acyl-sn-glycero-3-phospho-L-serine is bound at residue K209.

It belongs to the NGF-beta family. Homodimer. The homodimer interacts with a single NTRK1 chain. The homodimer interacts with a single NGFR chain. The NGF dimer interacts with a single SORCS2 chain (via extracellular domain). The NGF precursor (proNGF) binds to a receptor complex formed by SORT1 and NGFR, which leads to NGF endocytosis. Both mature NGF and the immature NGF precursor (proNGF) interact with SORCS2 and with the heterodimer formed by SORCS2 and NGFR (via extracellular domains). The NGF precursor (proNGF) has much higher affinity for SORCS2 than mature NGF. The NGF precursor (proNGF) has much higher affinity for SORT1 than mature NGF. Interacts with ADAM10 in a divalent cation-dependent manner. Interacts with SORCS3. As to expression, detected in submaxillary gland (at protein level). Highly expressed in male submaxillary gland. Levels are much lower in female submaxillary gland.

Its subcellular location is the secreted. It localises to the endosome lumen. Its function is as follows. Nerve growth factor is important for the development and maintenance of the sympathetic and sensory nervous systems. Extracellular ligand for the NTRK1 and NGFR receptors, activates cellular signaling cascades to regulate neuronal proliferation, differentiation and survival. The immature NGF precursor (proNGF) functions as a ligand for the heterodimeric receptor formed by SORCS2 and NGFR, and activates cellular signaling cascades that lead to inactivation of RAC1 and/or RAC2, reorganization of the actin cytoskeleton and neuronal growth cone collapse. In contrast to mature NGF, the precursor form (proNGF) promotes neuronal apoptosis (in vitro). Inhibits metalloproteinase-dependent proteolysis of platelet glycoprotein VI. Binds lysophosphatidylinositol and lysophosphatidylserine between the two chains of the homodimer. The lipid-bound form promotes histamine relase from mast cells, contrary to the lipid-free form. The polypeptide is Beta-nerve growth factor (Ngf) (Mus musculus (Mouse)).